The sequence spans 632 residues: X-ray repair cross-complementing protein 5 (632 aa).

Catalysis depends on Arg52, which acts as the Schiff-base intermediate with DNA; for 5'-deoxyribose-5-phosphate lyase activity. Positions 283 to 490 constitute a Ku domain; sequence LYLNKDLSFS…VDKMKGIIQK (208 aa). Residues 555–578 are disordered; sequence DYSPEGKAAKRKQAGDAQAEKRPK. Positions 595–629 constitute an SAP domain; it reads LGKLTVSALKDTCRHYGLRSGGKKQELIDALTEYF.

This sequence belongs to the ku70 family. Heterodimer composed of XRCC5/Ku80 and XRCC6/Ku70. Component of the core long-range non-homologous end joining (NHEJ) complex (also named DNA-PK complex) composed of PRKDC, LIG4, XRCC4, XRCC6/Ku70, XRCC5/Ku86 and NHEJ1/XLF. Additional component of the NHEJ complex includes PAXX. Following autophosphorylation, PRKDC dissociates from DNA, leading to formation of the short-range NHEJ complex, composed of LIG4, XRCC4, XRCC6/Ku70, XRCC5/Ku86 and NHEJ1/XLF. Phosphorylated on serine residues.

Its subcellular location is the nucleus. The protein localises to the chromosome. Its function is as follows. Single-stranded DNA-dependent ATP-dependent helicase that plays a key role in DNA non-homologous end joining (NHEJ) by recruiting DNA-PK to DNA. Required for double-strand break repair and V(D)J recombination. Also has a role in chromosome translocation. Has a role in chromosome translocation. The DNA helicase II complex binds preferentially to fork-like ends of double-stranded DNA in a cell cycle-dependent manner. It works in the 3'-5' direction. During NHEJ, the XRCC5-XRRC6 dimer performs the recognition step: it recognizes and binds to the broken ends of the DNA and protects them from further resection. Binding to DNA may be mediated by XRCC6. The XRCC5-XRRC6 dimer acts as a regulatory subunit of the DNA-dependent protein kinase complex DNA-PK by increasing the affinity of the catalytic subunit PRKDC to DNA by 100-fold. The XRCC5-XRRC6 dimer is probably involved in stabilizing broken DNA ends and bringing them together. The assembly of the DNA-PK complex to DNA ends is required for the NHEJ ligation step. Probably also acts as a 5'-deoxyribose-5-phosphate lyase (5'-dRP lyase), by catalyzing the beta-elimination of the 5' deoxyribose-5-phosphate at an abasic site near double-strand breaks. 5'-dRP lyase activity allows to 'clean' the termini of abasic sites, a class of nucleotide damage commonly associated with strand breaks, before such broken ends can be joined. The XRCC5-XRRC6 dimer together with APEX1 acts as a negative regulator of transcription. In Gallus gallus (Chicken), this protein is X-ray repair cross-complementing protein 5 (XRCC6).